The following is a 435-amino-acid chain: Cytochrome c oxidase subunit 3 (435 aa).

7 helical membrane passes run 70 to 90, 96 to 116, 132 to 152, 176 to 196, 325 to 345, 360 to 380, and 412 to 432; these read VAPLAVTLPLGFFVLNYFGVI, LLIALSSFIGGLVIWTISIIF, LVMGMMMFIISEVMFFFSFFW, VYSYMGLPLLNTVLLLLSGAI, LYFTLLCAVVFLACQGYEYFF, FLLTGFHGFHVLVGSILIGII, and LFYWHFVDIVWIFLYIVIYWW.

The protein belongs to the cytochrome c oxidase subunit 3 family. In terms of assembly, component of the cytochrome c oxidase (complex IV, CIV), a multisubunit enzyme composed of a catalytic core of 3 subunits and several supernumerary subunits. The complex exists as a monomer or a dimer and forms supercomplexes (SCs) in the inner mitochondrial membrane with ubiquinol-cytochrome c oxidoreductase (cytochrome b-c1 complex, complex III, CIII).

The protein localises to the mitochondrion inner membrane. It catalyses the reaction 4 Fe(II)-[cytochrome c] + O2 + 8 H(+)(in) = 4 Fe(III)-[cytochrome c] + 2 H2O + 4 H(+)(out). Component of the cytochrome c oxidase, the last enzyme in the mitochondrial electron transport chain which drives oxidative phosphorylation. The respiratory chain contains 3 multisubunit complexes succinate dehydrogenase (complex II, CII), ubiquinol-cytochrome c oxidoreductase (cytochrome b-c1 complex, complex III, CIII) and cytochrome c oxidase (complex IV, CIV), that cooperate to transfer electrons derived from NADH and succinate to molecular oxygen, creating an electrochemical gradient over the inner membrane that drives transmembrane transport and the ATP synthase. Cytochrome c oxidase is the component of the respiratory chain that catalyzes the reduction of oxygen to water. Electrons originating from reduced cytochrome c in the intermembrane space (IMS) are transferred via the dinuclear copper A center (CU(A)) of subunit 2 and heme A of subunit 1 to the active site in subunit 1, a binuclear center (BNC) formed by heme A3 and copper B (CU(B)). The BNC reduces molecular oxygen to 2 water molecules using 4 electrons from cytochrome c in the IMS and 4 protons from the mitochondrial matrix. The protein is Cytochrome c oxidase subunit 3 (cox3) of Dictyostelium discoideum (Social amoeba).